An 896-amino-acid chain; its full sequence is Probable DNA-directed RNA polymerase (896 aa).

Active-site residues include Asp546, Lys617, and Asp798.

The protein belongs to the phage and mitochondrial RNA polymerase family.

It localises to the mitochondrion. The catalysed reaction is RNA(n) + a ribonucleoside 5'-triphosphate = RNA(n+1) + diphosphate. Functionally, DNA-dependent RNA polymerase catalyzes the transcription of DNA into RNA using the four ribonucleoside triphosphates as substrates. This Neurospora crassa protein is Probable DNA-directed RNA polymerase.